Reading from the N-terminus, the 261-residue chain is 3-methyl-2-oxobutanoate hydroxymethyltransferase (261 aa).

Residues Asp42 and Asp81 each contribute to the Mg(2+) site. 3-methyl-2-oxobutanoate-binding positions include 42 to 43 (DS), Asp81, and Lys110. Glu112 lines the Mg(2+) pocket. The Proton acceptor role is filled by Glu179.

The protein belongs to the PanB family. As to quaternary structure, homodecamer; pentamer of dimers. Requires Mg(2+) as cofactor.

It localises to the cytoplasm. It carries out the reaction 3-methyl-2-oxobutanoate + (6R)-5,10-methylene-5,6,7,8-tetrahydrofolate + H2O = 2-dehydropantoate + (6S)-5,6,7,8-tetrahydrofolate. It participates in cofactor biosynthesis; (R)-pantothenate biosynthesis; (R)-pantoate from 3-methyl-2-oxobutanoate: step 1/2. Catalyzes the reversible reaction in which hydroxymethyl group from 5,10-methylenetetrahydrofolate is transferred onto alpha-ketoisovalerate to form ketopantoate. This is 3-methyl-2-oxobutanoate hydroxymethyltransferase from Thermus thermophilus (strain ATCC BAA-163 / DSM 7039 / HB27).